The primary structure comprises 484 residues: Poly(A) RNA polymerase GLD2 (484 aa).

Residues serine 62 and serine 69 each carry the phosphoserine modification. The Nuclear localization signal motif lies at 76-92 (KRISDEKAFRLDGKRQR). Serine 95 is modified (phosphoserine). 2 residues coordinate Mg(2+): aspartate 213 and aspartate 215. A PAP-associated domain is found at 386 to 440 (SLGDLLLGFLKYYATEFDWNTQMISVREAKAIPRPDDMEWRNKYICVEEPFDGTN).

It belongs to the DNA polymerase type-B-like family. GLD2 subfamily. Interacts with CPEB1, CPEB2, CPSF1 and PABPC1. Interacts with QKI isoform QKI7; promoting recruitment to miRNA miR-122 and miR-122 stabilization. Mg(2+) serves as cofactor. Requires Mn(2+) as cofactor.

The protein localises to the cytoplasm. Its subcellular location is the nucleus. The catalysed reaction is RNA(n) + ATP = RNA(n)-3'-adenine ribonucleotide + diphosphate. Its function is as follows. Cytoplasmic poly(A) RNA polymerase that adds successive AMP monomers to the 3'-end of specific RNAs, forming a poly(A) tail. In contrast to the canonical nuclear poly(A) RNA polymerase, it only adds poly(A) to selected cytoplasmic mRNAs. Does not play a role in replication-dependent histone mRNA degradation. Adds a single nucleotide to the 3' end of specific miRNAs, monoadenylation stabilizes and prolongs the activity of some but not all miRNAs. The polypeptide is Poly(A) RNA polymerase GLD2 (Rattus norvegicus (Rat)).